Here is a 390-residue protein sequence, read N- to C-terminus: Two-component response regulator ORR29 (390 aa).

In terms of domain architecture, Response regulatory spans 13 to 130 (SAMVIDEDKC…TIKNLWQYVD (118 aa)). D65 bears the 4-aspartylphosphate mark. The myb-like GARP DNA-binding region spans 169–226 (KKYYLMWTPHLQKKFLHALQILGKDASPKNIKKIMGVDNIDCRQIAAHLQKHRLRLTK). Disordered regions lie at residues 233 to 271 (FTTDTSKDESNSRIGPAESHHVCRNASTLQPRSNTQPTE) and 303 to 339 (SKHSSDPSGDEDEQVVVGGDQDGCANEANDIDSSGDH). The segment covering 257–271 (NASTLQPRSNTQPTE) has biased composition (polar residues).

It belongs to the ARR family. Type-B subfamily. Post-translationally, two-component system major event consists of a His-to-Asp phosphorelay between a sensor histidine kinase (HK) and a response regulator (RR). In plants, the His-to-Asp phosphorelay involves an additional intermediate named Histidine-containing phosphotransfer protein (HPt). This multistep phosphorelay consists of a His-Asp-His-Asp sequential transfer of a phosphate group between first a His and an Asp of the HK protein, followed by the transfer to a conserved His of the HPt protein and finally the transfer to an Asp in the receiver domain of the RR protein.

Its subcellular location is the nucleus. Functionally, transcriptional activator that binds specific DNA sequence. Functions as a response regulator involved in His-to-Asp phosphorelay signal transduction system. Phosphorylation of the Asp residue in the receiver domain activates the ability of the protein to promote the transcription of target genes. May directly activate some type-A response regulators in response to cytokinins. The sequence is that of Two-component response regulator ORR29 from Oryza sativa subsp. indica (Rice).